The primary structure comprises 506 residues: BTB/POZ domain-containing protein At3g22104 (506 aa).

Positions 6–76 (SDLEVDINGE…CYNDGRVAVM (71 aa)) constitute a BTB domain. The NPH3 domain maps to 187–435 (TWWFDEVLVL…LDEQQQQQQQ (249 aa)). Residues 421–492 (QAIETLDEQQ…MEVIKKRSKS (72 aa)) adopt a coiled-coil conformation. A disordered region spans residues 485–506 (VIKKRSKSSSKGSNRSLPKLCS).

Belongs to the NPH3 family.

Its pathway is protein modification; protein ubiquitination. May act as a substrate-specific adapter of an E3 ubiquitin-protein ligase complex (CUL3-RBX1-BTB) which mediates the ubiquitination and subsequent proteasomal degradation of target proteins. The protein is BTB/POZ domain-containing protein At3g22104 of Arabidopsis thaliana (Mouse-ear cress).